The primary structure comprises 1128 residues: Zinc finger protein 654 (1128 aa).

Positions 498 to 523 (GFDSLTDQSTGETDPDDVSGVQPKGH) are disordered. 5 consecutive C2H2-type zinc fingers follow at residues 572 to 594 (FACVICGRKFRNRGLMQKHLKNH), 746 to 771 (FKCPALGCVRIFKRIGFLNKHAMTVH), 787 to 809 (GKCKFCQRQFEDSQHFIDHLNRH), 815 to 839 (YFCLHFNCNESFKLPFQLAQHTKSH), and 844 to 868 (AQCSFPECHELFEDLPLLYEHEAQH). The disordered stretch occupies residues 891–951 (DSNPNQEKDS…GNERSDDTVS (61 aa)). Polar residues-rich tracts occupy residues 903 to 915 (NEKQTISLPVSTS) and 937 to 951 (SLVQNGNERSDDTVS). A phosphoserine mark is found at Ser1123 and Ser1127.

This sequence belongs to the krueppel C2H2-type zinc-finger protein family.

It localises to the nucleus. Its function is as follows. May be involved in transcriptional regulation. This chain is Zinc finger protein 654, found in Homo sapiens (Human).